A 220-amino-acid chain; its full sequence is Deoxyribose-phosphate aldolase 1 (220 aa).

Aspartate 89 functions as the Proton donor/acceptor in the catalytic mechanism. Lysine 151 (schiff-base intermediate with acetaldehyde) is an active-site residue. Lysine 180 serves as the catalytic Proton donor/acceptor.

It belongs to the DeoC/FbaB aldolase family. DeoC type 1 subfamily.

Its subcellular location is the cytoplasm. The catalysed reaction is 2-deoxy-D-ribose 5-phosphate = D-glyceraldehyde 3-phosphate + acetaldehyde. Its pathway is carbohydrate degradation; 2-deoxy-D-ribose 1-phosphate degradation; D-glyceraldehyde 3-phosphate and acetaldehyde from 2-deoxy-alpha-D-ribose 1-phosphate: step 2/2. Catalyzes a reversible aldol reaction between acetaldehyde and D-glyceraldehyde 3-phosphate to generate 2-deoxy-D-ribose 5-phosphate. In Staphylococcus aureus (strain MSSA476), this protein is Deoxyribose-phosphate aldolase 1.